Here is a 306-residue protein sequence, read N- to C-terminus: MSNWLVDKLIPSIMRSEVKKSSVPEGLWHKCPSCEAVLYRPELEKTLDVCPKCNHHMRIGARARIDIFLDAEGRAELGADLEPVDRLKFRDGKKYKDRLTAAQKQTGEKDALISMSGTLLGMPVVVSAFEFSFMGGSMGAIVGERFVRAANYALEKRCPMICFSASGGARMQEALISLMQMAKTSAVLARLREEGIPFISVLTDPVYGGVSASLAMLGDVIVAEPKALVGFAGPRVIEQTVREKLPEGFQRSEFLLEHGAIDMIISRQELRPRLGNLLAQLMGLPTPEFVAAPVEPIVVPPAPANL.

The CoA carboxyltransferase N-terminal domain occupies 27-296 (LWHKCPSCEA…PEFVAAPVEP (270 aa)). Zn(2+) contacts are provided by Cys-31, Cys-34, Cys-50, and Cys-53. A C4-type zinc finger spans residues 31-53 (CPSCEAVLYRPELEKTLDVCPKC).

Belongs to the AccD/PCCB family. Acetyl-CoA carboxylase is a heterohexamer composed of biotin carboxyl carrier protein (AccB), biotin carboxylase (AccC) and two subunits each of ACCase subunit alpha (AccA) and ACCase subunit beta (AccD). Zn(2+) is required as a cofactor.

The protein localises to the cytoplasm. The enzyme catalyses N(6)-carboxybiotinyl-L-lysyl-[protein] + acetyl-CoA = N(6)-biotinyl-L-lysyl-[protein] + malonyl-CoA. The protein operates within lipid metabolism; malonyl-CoA biosynthesis; malonyl-CoA from acetyl-CoA: step 1/1. Functionally, component of the acetyl coenzyme A carboxylase (ACC) complex. Biotin carboxylase (BC) catalyzes the carboxylation of biotin on its carrier protein (BCCP) and then the CO(2) group is transferred by the transcarboxylase to acetyl-CoA to form malonyl-CoA. The sequence is that of Acetyl-coenzyme A carboxylase carboxyl transferase subunit beta from Pseudomonas fluorescens (strain ATCC BAA-477 / NRRL B-23932 / Pf-5).